A 39-amino-acid chain; its full sequence is Photosystem II reaction center protein L (39 aa).

A helical transmembrane segment spans residues 18-38 (SLYLGVLSVLVLGILFSSYFF).

This sequence belongs to the PsbL family. As to quaternary structure, PSII is composed of 1 copy each of membrane proteins PsbA, PsbB, PsbC, PsbD, PsbE, PsbF, PsbH, PsbI, PsbJ, PsbK, PsbL, PsbM, PsbT, PsbX, PsbY, Psb30/Ycf12, peripheral proteins PsbO, CyanoQ (PsbQ), PsbU, PsbV and a large number of cofactors. It forms dimeric complexes.

It localises to the cellular thylakoid membrane. Its function is as follows. One of the components of the core complex of photosystem II (PSII). PSII is a light-driven water:plastoquinone oxidoreductase that uses light energy to abstract electrons from H(2)O, generating O(2) and a proton gradient subsequently used for ATP formation. It consists of a core antenna complex that captures photons, and an electron transfer chain that converts photonic excitation into a charge separation. This subunit is found at the monomer-monomer interface and is required for correct PSII assembly and/or dimerization. In Prochlorococcus marinus (strain MIT 9515), this protein is Photosystem II reaction center protein L.